Here is a 605-residue protein sequence, read N- to C-terminus: F-box/WD repeat-containing protein 1A (605 aa).

Positions 128-177 (ASYEKEKELCVKYFEQWSESDQVEFVEHLISQMCHYQHGHINSYLKPMLQ) are homodimerization domain D. In terms of domain architecture, F-box spans 190–228 (DHIAENILSYLDAKSLCAAELVCKEWYRVTSDGMLWKKL). A required for down-regulation of SNAI1 region spans residues 190–228 (DHIAENILSYLDAKSLCAAELVCKEWYRVTSDGMLWKKL). 7 WD repeats span residues 301 to 338 (ETSK…CKRI), 341 to 378 (GHTG…MLNT), 381 to 418 (HHCE…DITL), 424 to 461 (GHRA…FVRT), 464 to 503 (GHKR…RVLE), 505 to 541 (HEEL…DPRA), and 553 to 590 (EHSG…AAQA).

As to quaternary structure, homodimer. Self-associates. Component of the SCF(BTRC) complex formed of CUL1, SKP1, RBX1 and a BTRC dimer. Direct interaction with SKP1 occurs via the F-box domain. Interacts with phosphorylated ubiquitination substrates SMAD3 and SMAD4. Interacts with phosphorylated ubiquitination substrates CTNNB1, NFKBIA, NFKBIB, NFKBIE, NFKB1/nuclear factor NF-kappa-B p105 subunit, ATF4, CDC25A, DLG1, FBXO5 and SNAI1; the interaction requires the phosphorylation of the 2 serine residues in the substrate destruction motif D-S-G-X(2,3,4)-S. Binds UBQLN1. Interacts with CDC34 and UBE2R2. Interacts with FBXW11. Interacts with CUL4A and DDB1. Part of a SCF(BTRC)-like complex lacking CUL1, which is associated with phosphorylated NKBIA and RELA; RELA interacts directly with NFKBIA. Interacts with the phosphorylated form of GLI3. Interacts with CLU. Interacts with PER1 (phosphorylated), PER2 (phosphorylated) and PER3. Interacts with phosphorylated ubiquitination substrate CEP68. Interacts with ZC3H12A; this interaction occurs when ZC3H12A is phosphorylated in a IKBKB/IKKB-dependent manner. Interacts with HSF1; this interaction occurs during mitosis and induces HSF1 ubiquitin-dependent degradation, a process inhibited by CDC20. Interacts with NFE2L1. Interacts with INAVA. Interacts with IL10RA; this interaction leads to IL10RA ubiquitination and subsequent degradation. Interacts with REST. Interacts with KLF4; this interaction leads to KLF4 ubiquitination and subsequent degradation. Interacts with UBR2, as part of a SCF(BTRC) complex; the interaction mediates 'Lys-48'-linked ubiquitination of UBR2 and is regulated by DUSP22 in the T-cell receptor signaling pathway. (Microbial infection) Interacts with vaccinia virus A49; this interaction inhibits NF-kappa-B activation. In terms of assembly, (Microbial infection) Interacts with HIV-1 Vpu. Ubiquitinated. Deubiquitinated by OTUD5, promoting its stability. In terms of tissue distribution, expressed in epididymis (at protein level).

It localises to the cytoplasm. The protein localises to the nucleus. Its pathway is protein modification; protein ubiquitination. Its function is as follows. Substrate recognition component of a SCF (SKP1-CUL1-F-box protein) E3 ubiquitin-protein ligase complex which mediates the ubiquitination and subsequent proteasomal degradation of target proteins. Recognizes and binds to phosphorylated target proteins. SCF(BTRC) mediates the ubiquitination of CTNNB1 and participates in Wnt signaling. SCF(BTRC) mediates the ubiquitination of phosphorylated NFKB1, ATF4, CDC25A, DLG1, FBXO5, PER1, SMAD3, SMAD4, SNAI1 and probably NFKB2. SCF(BTRC) mediates the ubiquitination of NFKBIA, NFKBIB and NFKBIE; the degradation frees the associated NFKB1 to translocate into the nucleus and to activate transcription. Ubiquitination of NFKBIA occurs at 'Lys-21' and 'Lys-22'. The SCF(FBXW11) complex also regulates NF-kappa-B by mediating ubiquitination of phosphorylated NFKB1: specifically ubiquitinates the p105 form of NFKB1, leading to its degradation. SCF(BTRC) mediates the ubiquitination of CEP68; this is required for centriole separation during mitosis. SCF(BTRC) mediates the ubiquitination and subsequent degradation of nuclear NFE2L1. Has an essential role in the control of the clock-dependent transcription via degradation of phosphorylated PER1 and PER2. May be involved in ubiquitination and subsequent proteasomal degradation through a DBB1-CUL4 E3 ubiquitin-protein ligase. Required for activation of NFKB-mediated transcription by IL1B, MAP3K14, MAP3K1, IKBKB and TNF. Required for proteolytic processing of GLI3. Mediates ubiquitination of REST, thereby leading to its proteasomal degradation. SCF(BTRC) mediates the ubiquitination and subsequent proteasomal degradation of KLF4; thereby negatively regulating cell pluripotency maintenance and embryogenesis. SCF(BTRC) acts as a regulator of mTORC1 signaling pathway by catalyzing ubiquitination and subsequent proteasomal degradation of phosphorylated DEPTOR, TFE3 and MITF. SCF(BTRC) directs 'Lys-48'-linked ubiquitination of UBR2 in the T-cell receptor signaling pathway. The protein is F-box/WD repeat-containing protein 1A (BTRC) of Homo sapiens (Human).